We begin with the raw amino-acid sequence, 280 residues long: UPF0276 protein NGO_1946 (280 aa).

This sequence belongs to the UPF0276 family.

The polypeptide is UPF0276 protein NGO_1946 (Neisseria gonorrhoeae (strain ATCC 700825 / FA 1090)).